The sequence spans 594 residues: Probable pectinesterase/pectinesterase inhibitor 33 (594 aa).

Residues 1-22 form the signal peptide; that stretch reads MLRGIFHICLLASFLLLPFSSA. A disordered region spans residues 28–75; it reads FTGGTDAPPPWDHNVSPPPETAPSPTPTSSPSTTSPPSPGPVAAPSPI. The span at 34–71 shows a compositional bias: pro residues; the sequence is APPPWDHNVSPPPETAPSPTPTSSPSTTSPPSPGPVAA. N-linked (GlcNAc...) asparagine glycosylation is found at Asn-77, Asn-170, Asn-213, and Asn-226. Residues 78–237 form a pectinesterase inhibitor 33 region; the sequence is GSVSGDMTWW…SDLIGNCLAV (160 aa). The pectinesterase 33 stretch occupies residues 280 to 581; the sequence is HLVVAQDRSG…TVGSLIAGGS (302 aa). Substrate contacts are provided by Thr-356 and Gln-386. Asp-409 functions as the Proton donor; for pectinesterase activity in the catalytic mechanism. Cys-423 and Cys-443 are joined by a disulfide. The active-site Nucleophile; for pectinesterase activity is Asp-430. Residues Arg-498 and Trp-500 each coordinate substrate.

The protein in the N-terminal section; belongs to the PMEI family. In the C-terminal section; belongs to the pectinesterase family. Expressed in siliques.

It is found in the secreted. The protein resides in the cell wall. The enzyme catalyses [(1-&gt;4)-alpha-D-galacturonosyl methyl ester](n) + n H2O = [(1-&gt;4)-alpha-D-galacturonosyl](n) + n methanol + n H(+). Its pathway is glycan metabolism; pectin degradation; 2-dehydro-3-deoxy-D-gluconate from pectin: step 1/5. Its function is as follows. Acts in the modification of cell walls via demethylesterification of cell wall pectin. The chain is Probable pectinesterase/pectinesterase inhibitor 33 (PME33) from Arabidopsis thaliana (Mouse-ear cress).